The following is a 348-amino-acid chain: Anthranilate phosphoribosyltransferase (348 aa).

5-phospho-alpha-D-ribose 1-diphosphate-binding positions include glycine 89, 92–93 (GD), threonine 97, 99–102 (NIST), 117–125 (KHGNRSVSS), and serine 129. Position 89 (glycine 89) interacts with anthranilate. Serine 101 contributes to the Mg(2+) binding site. Residue asparagine 120 participates in anthranilate binding. Arginine 175 lines the anthranilate pocket. Aspartate 233 and glutamate 234 together coordinate Mg(2+).

Belongs to the anthranilate phosphoribosyltransferase family. Homodimer. It depends on Mg(2+) as a cofactor.

The catalysed reaction is N-(5-phospho-beta-D-ribosyl)anthranilate + diphosphate = 5-phospho-alpha-D-ribose 1-diphosphate + anthranilate. It participates in amino-acid biosynthesis; L-tryptophan biosynthesis; L-tryptophan from chorismate: step 2/5. In terms of biological role, catalyzes the transfer of the phosphoribosyl group of 5-phosphorylribose-1-pyrophosphate (PRPP) to anthranilate to yield N-(5'-phosphoribosyl)-anthranilate (PRA). This Shewanella putrefaciens (strain CN-32 / ATCC BAA-453) protein is Anthranilate phosphoribosyltransferase.